We begin with the raw amino-acid sequence, 474 residues long: Pyruvate kinase (474 aa).

Arg-37 is a substrate binding site. The K(+) site is built by Asn-39, Ser-41, and Asp-71. 39–42 (NFSH) provides a ligand contact to ATP. ATP is bound by residues Arg-78 and Lys-160. Glu-222 contacts Mg(2+). Positions 245, 246, and 278 each coordinate substrate. Position 246 (Asp-246) interacts with Mg(2+).

Belongs to the pyruvate kinase family. In terms of assembly, homotetramer. Requires Mg(2+) as cofactor. The cofactor is K(+).

It carries out the reaction pyruvate + ATP = phosphoenolpyruvate + ADP + H(+). It participates in carbohydrate degradation; glycolysis; pyruvate from D-glyceraldehyde 3-phosphate: step 5/5. This chain is Pyruvate kinase (ttuE), found in Agrobacterium vitis (Rhizobium vitis).